Here is a 414-residue protein sequence, read N- to C-terminus: Probable protein phosphatase 2C 9 (414 aa).

The helical transmembrane segment at 15 to 37 (TATAAVAAAVSASAAAAVSSAID) threads the bilayer. A disordered region spans residues 56–95 (LQAGEDGRPGKRQRLARTASGAPRPDEDSASERPSCGRTE). In terms of domain architecture, PPM-type phosphatase spans 99–410 (RYGVTAVCGR…DNVSVVVVDL (312 aa)). Mn(2+)-binding residues include Asp136 and Gly137. The span at 186–195 (GNRASTRSDD) shows a compositional bias: basic and acidic residues. Positions 186–212 (GNRASTRSDDEPACPCEQQTPSRRDHA) are disordered. Asp319 serves as a coordination point for Mn(2+). A disordered region spans residues 345–372 (APAARPSGVPSSAEAAETENGGAASVKG). Residues 355–369 (SSAEAAETENGGAAS) show a composition bias toward low complexity. Asp401 lines the Mn(2+) pocket.

The protein belongs to the PP2C family. Mg(2+) serves as cofactor. It depends on Mn(2+) as a cofactor.

It localises to the membrane. The enzyme catalyses O-phospho-L-seryl-[protein] + H2O = L-seryl-[protein] + phosphate. It carries out the reaction O-phospho-L-threonyl-[protein] + H2O = L-threonyl-[protein] + phosphate. The protein is Probable protein phosphatase 2C 9 of Oryza sativa subsp. japonica (Rice).